The sequence spans 699 residues: Glycine--tRNA ligase beta subunit (699 aa).

The protein belongs to the class-II aminoacyl-tRNA synthetase family. In terms of assembly, tetramer of two alpha and two beta subunits.

It is found in the cytoplasm. It carries out the reaction tRNA(Gly) + glycine + ATP = glycyl-tRNA(Gly) + AMP + diphosphate. In Bradyrhizobium diazoefficiens (strain JCM 10833 / BCRC 13528 / IAM 13628 / NBRC 14792 / USDA 110), this protein is Glycine--tRNA ligase beta subunit.